The following is a 101-amino-acid chain: Small ribosomal subunit protein uS14 (101 aa).

The protein belongs to the universal ribosomal protein uS14 family. As to quaternary structure, part of the 30S ribosomal subunit. Contacts proteins S3 and S10.

In terms of biological role, binds 16S rRNA, required for the assembly of 30S particles and may also be responsible for determining the conformation of the 16S rRNA at the A site. This Rhizobium meliloti (strain 1021) (Ensifer meliloti) protein is Small ribosomal subunit protein uS14.